A 765-amino-acid polypeptide reads, in one-letter code: Amine oxidase [copper-containing] 3 (765 aa).

Residues 1–6 are Cytoplasmic-facing; the sequence is MTQKTT. The chain crosses the membrane as a helical; Signal-anchor for type II membrane protein span at residues 7-27; sequence LVLLALAVITIFALVCVLLAG. Residues 28-765 lie on the Extracellular side of the membrane; sequence RSGDGGGLSQ…SHGGFAYRDN (738 aa). Asn-137 carries an N-linked (GlcNAc...) asparagine glycan. Cys-198 and Cys-199 are joined by a disulfide. Residues Asn-232 and Asn-294 are each glycosylated (N-linked (GlcNAc...) asparagine). The active-site Proton acceptor is the Asp-386. Cys-404 and Cys-430 are disulfide-bonded. Tyr-471 serves as the catalytic Schiff-base intermediate with substrate; via topaquinone. Position 471 is a 2',4',5'-topaquinone (Tyr-471). Residues His-520 and His-522 each coordinate Cu(2+). Residues Asp-529, Leu-530, Asp-531, and Glu-572 each coordinate Ca(2+). N-linked (GlcNAc...) asparagine glycosylation occurs at Asn-592. Glu-641 contacts Ca(2+). Asn-659 carries N-linked (GlcNAc...) asparagine glycosylation. Phe-663 serves as a coordination point for Ca(2+). N-linked (GlcNAc...) asparagine glycosylation occurs at Asn-666. Ca(2+) is bound by residues Glu-667, Asp-673, and Leu-674. His-684 is a Cu(2+) binding site. Cys-734 and Cys-741 are joined by a disulfide.

This sequence belongs to the copper/topaquinone oxidase family. In terms of assembly, homodimer; disulfide-linked. Probably forms heterodimers with AOC2. Cu(2+) is required as a cofactor. Requires Ca(2+) as cofactor. It depends on L-topaquinone as a cofactor. Topaquinone (TPQ) is generated by copper-dependent autoxidation of a specific tyrosyl residue. In terms of processing, N- and O-glycosylated.

It is found in the cell membrane. The catalysed reaction is methylamine + O2 + H2O = formaldehyde + H2O2 + NH4(+). The enzyme catalyses benzylamine + O2 + H2O = benzaldehyde + H2O2 + NH4(+). It catalyses the reaction 2-phenylethylamine + O2 + H2O = 2-phenylacetaldehyde + H2O2 + NH4(+). Functionally, catalyzes the oxidative deamination of primary amines to the corresponding aldehydes with the concomitant production of hydrogen peroxide and ammonia. Has a preference for the primary monoamines methylamine and benzylamine. Could also act on 2-phenylethylamine but much less efficiently. At endothelial cells surface can also function as a cell adhesion protein that participates in lymphocyte extravasation and recirculation by mediating the binding of lymphocytes to peripheral lymph node vascular endothelial cells in an L-selectin-independent fashion. The sequence is that of Amine oxidase [copper-containing] 3 from Mus musculus (Mouse).